The following is a 638-amino-acid chain: MAVDSRMDLLSERAVLMRASLQKSQTITDNVVSILGSFDSRLSALETAMRPTQIRTHAIRKAHENIDRTLKAAEVILSQFDLLRQAETKVLKGPHEDLESYLDAIAQLRKIIRYFMSNKSFKSSDGVLNHANSLLAKAQSKLEEEFKQLLASYSKAVEPDRLFDGLPNSLRPSSDGDGGGKPHGGHHNDDAETAAYTLPILIPSRVLPLLHDLAQQMVQAGHQQQLLQIYRDTRSFVLEESLKKLGVEKLSKEDVQRMQWEVLEAKIGNWIHFMRIAVKLLFAGERQVCDQIFRGFDSLSDQCFAEVTVSSVSMLLSFGDAIARSKRSPEKLFVLLDMYEIMRELHTEIETIFKGKACLEIRDSATGLTKRLAQTAQETFGDFEEAVEKDATKTAVLDGTVHPLTSYVINYVKFLFDYQTTLKQLFLEFGNGDDSNSQLASVTMRIMQALQNNLDGKSKQYKDPALTHLFLMNNIHYMVRSVRRSEAKDLLGDDWVQRHRRIVQQHANQYKRVAWTKILQSSSAQGLTSSGGGSLEGGNSSGVSRGLLKERFKMFNMQFDELHQRQSQWTVPDTELRESLRLAVAEVLLPAYRSFLKRFGPLVESGKNPQKYIKYTAEDLERLLGELFEGKSMNEPRR.

Positions 163-190 (FDGLPNSLRPSSDGDGGGKPHGGHHNDD) are disordered.

Belongs to the EXO70 family. As to quaternary structure, the exocyst complex is composed of SEC3, SEC5, SEC6, SEC8, SEC10, EXO70A1 and EXO84B. Interacts with SEC3A and EXO84B. Co-localizes with FPP3/VETH1, FPP2/VETH2 and COG2 in vesicle-like small motile compartments. May interact with COG2.

The protein localises to the cytoplasm. The protein resides in the cytosol. It is found in the cytoskeleton. It localises to the phragmoplast. Its subcellular location is the cell membrane. The protein localises to the secreted. The protein resides in the cell wall. Its function is as follows. Component of the exocyst complex involved in the docking of exocytic vesicles with fusion sites on the plasma membrane during regulated or polarized secretion. Involved in polarized cell growth and organ morphogenesis. Involved in polarized cell growth and organ morphogenesis. During cytokinesis, involved in cell plate initiation, cell plate maturation and formation of new primary cell wall. Participates in polarized pectin delivery required for the polarized development of the mucilage-producing volcano cells of the seed coat. Involved in the recycling and localization of auxin efflux carriers PIN1 and PIN2, and thus in polar auxin transport regulation. Functions in vesicle trafficking in tracheary elements to regulate patterned secondary cell wall (SCW) thickening. The sequence is that of Exocyst complex component EXO70A1 from Arabidopsis thaliana (Mouse-ear cress).